We begin with the raw amino-acid sequence, 178 residues long: MKIIITGEPGVGKTTLVKKIVERLGKRAIGFWTEEVRDPETKKRTGFRIITTEGKKKIFSSKFFTSKKLVGSYGVNVQYFEELAIPILERAYREAKKDRRKVIIIDEIGKMELFSKKFRDLVRQIMHDPNVNVVATIPIRDVHPLVKEIRRLPGAVLIELTPENRDVILEDILSLLER.

Residues 7–14 (GEPGVGKT) and 102–109 (VIIIDEIG) each bind ATP.

It belongs to the THEP1 NTPase family. Monomer.

It carries out the reaction a ribonucleoside 5'-triphosphate + H2O = a ribonucleoside 5'-diphosphate + phosphate + H(+). Has nucleotide phosphatase activity towards ATP, GTP, CTP, TTP and UTP. May hydrolyze nucleoside diphosphates with lower efficiency. Does not have kinase activity. This chain is Nucleoside-triphosphatase THEP1, found in Aquifex aeolicus (strain VF5).